The chain runs to 442 residues: Protein bag of marbles (442 aa).

The interval 201-250 (FDMPVKSTMPKSLNVRYQLQVLCTKVERFLVQQRRTLEANRHFDFEKYDE) is required for interaction with ubiquitin. Residues 408 to 442 (VSMEQPSASEEEFEETEEVPSSPPRHTGRVPRFRS) form a disordered region. Residues 416-425 (SEEEFEETEE) show a composition bias toward acidic residues. Residues 433-442 (HTGRVPRFRS) are compositionally biased toward basic residues.

In terms of assembly, interacts (via central region) with ubiquitin. Interacts (via C-terminus) with otu (via OTU domain); the interaction enhances otu aggregation into amyloid-like structures and enhances its deubiquitinase activity. Together with otu interacts with CycA/cyclin-A (via C-terminus); the interaction stabilizes CycA by promoting and enhancing otu dependent deubiquitination of CycA. Together with otu interacts with Traf6. Part of a complex composed of at least tut, bam and bgcn; complex formation does not require RNA. Interacts (via C-terminus) with bgcn; the interaction is direct and is not disrupted by eIF4A. Interacts with eIF4A (via multiple contacts); the interaction is direct and is not disrupted by bgcn. Interacts (via N-terminus) with tut; the interaction is direct and mediates the interaction between tut and bgcn. As part of the bam-bgcn-tut complex associates with twin; may recruit the CCR4-NOT1 deadenylation complex to mRNA 3'-UTRs to mediate post-transcriptional regulation of expression. Part of a complex composed of at least mei-P26, bam, bgcn and Sxl; this complex is involved in translational repression of nanos mRNA. Ubiquitinated (C-terminal region). As to expression, in cystoblasts and/or very early cystocytes in testis (at protein level); expression levels are regulated by mei-P26. In cystoblasts and/or very early cystocytes in ovary. Expressed in the gut; expression levels increase with age.

It localises to the cytoplasm. Its function is as follows. Regulatory component of a deubiquitinase complex consisting of bam and otu. The complex deubiquitinates K63-linked polyubiquitinated proteins, antagonizing the ubiquitination activity of Traf6 and regulating the IMD immune signaling pathway. Otu-bam deubiquitinase activity is regulated by Traf6 dependent immune signaling regulation of bam expression levels; this forms a feedback loop that regulates the IMD immune signaling pathway and balances gut immune activity during aging. The complex deubiquitinates and stabilizes CycA/cyclin-A to regulate CycA-dependent differentiation. Required to initiate both male and female gametogenesis. Part of a complex with bgcn involved in 3'-UTR-dependent translational repression of a subset of mRNAs, including those for mei-P26, nanos and shg/E-cadherin. Repression of mei-P26 is targeted by let-7 miRNA. Involved in a regulatory cascade with mei-P26 to control the progression of cystocytes through transit amplification and the switch to spermatocyte differentiation; mei-P26 facilitates bam accumulation, which in turn represses translation of mei-P26. Forms a complex with tut and bgcn involved in 3'-UTR-dependent post-transcriptional repression of several 3'-RNA processing factors, which promotes germline stem cell lineage differentiation and mitosis-to-meiosis transition. The polypeptide is Protein bag of marbles (Drosophila melanogaster (Fruit fly)).